A 128-amino-acid polypeptide reads, in one-letter code: Small ribosomal subunit protein uS8 (128 aa).

The protein belongs to the universal ribosomal protein uS8 family. As to quaternary structure, part of the 30S ribosomal subunit. Contacts proteins S5 and S12.

Its function is as follows. One of the primary rRNA binding proteins, it binds directly to 16S rRNA central domain where it helps coordinate assembly of the platform of the 30S subunit. This is Small ribosomal subunit protein uS8 from Methylacidiphilum infernorum (isolate V4) (Methylokorus infernorum (strain V4)).